The sequence spans 295 residues: Nitrogenase iron protein (295 aa).

10–17 is an ATP binding site; the sequence is GKGGIGKS. Cys-98 contacts [4Fe-4S] cluster. Residue Arg-101 is modified to ADP-ribosylarginine; by dinitrogenase reductase ADP-ribosyltransferase. Cys-133 contacts [4Fe-4S] cluster.

It belongs to the NifH/BchL/ChlL family. In terms of assembly, homodimer. It depends on [4Fe-4S] cluster as a cofactor. The reversible ADP-ribosylation of Arg-101 inactivates the nitrogenase reductase and regulates nitrogenase activity.

It catalyses the reaction N2 + 8 reduced [2Fe-2S]-[ferredoxin] + 16 ATP + 16 H2O = H2 + 8 oxidized [2Fe-2S]-[ferredoxin] + 2 NH4(+) + 16 ADP + 16 phosphate + 6 H(+). In terms of biological role, the key enzymatic reactions in nitrogen fixation are catalyzed by the nitrogenase complex, which has 2 components: the iron protein and the molybdenum-iron protein. This chain is Nitrogenase iron protein, found in Tolumonas auensis (strain DSM 9187 / NBRC 110442 / TA 4).